The following is a 313-amino-acid chain: Adhesin MafA 2 (313 aa).

The N-terminal stretch at 1-14 (MKTLLLLIPLVLTA) is a signal peptide. Cys-15 carries the N-palmitoyl cysteine lipid modification. Cys-15 is lipidated: S-diacylglycerol cysteine. The span at 282 to 297 (GDTTAQNRPDFKQNNG) shows a compositional bias: polar residues. Residues 282–313 (GDTTAQNRPDFKQNNGKKPDVGNEVIRRRKGG) are disordered.

It belongs to the MafA family.

The protein resides in the cell outer membrane. This Neisseria meningitidis serogroup C / serotype 2a (strain ATCC 700532 / DSM 15464 / FAM18) protein is Adhesin MafA 2 (mafA2).